We begin with the raw amino-acid sequence, 215 residues long: Ependymin-2 (215 aa).

Positions 1-20 are cleaved as a signal peptide; it reads MHTVKLLCVVFSCLCAVAWA. N-linked (GlcNAc...) asparagine glycosylation is found at Asn71 and Asn94.

The protein belongs to the ependymin family. As to quaternary structure, forms disulfide-linked dimers. In terms of processing, different glycosylation variants are known as EPD-beta and EPD-gamma. Binds calcium through the terminal sialic acids. In terms of tissue distribution, EPDs are synthesized in the meninx and secreted in the cerebrospinal fluid.

It localises to the secreted. Functionally, may play a role in neural plasticity. May be involved during axon regeneration. In Carassius auratus (Goldfish), this protein is Ependymin-2 (epd2).